The sequence spans 110 residues: Snake venom vascular endothelial growth factor toxin (110 aa).

Position 1 is a pyrrolidone carboxylic acid (Gln1). Cystine bridges form between Cys14–Cys56, Cys45–Cys91, and Cys49–Cys93.

It belongs to the PDGF/VEGF growth factor family. Snake venom VEGF subfamily. As to quaternary structure, homodimer; disulfide-linked. Expressed by the venom gland.

It is found in the secreted. Its function is as follows. Snake venom VEGFs that may contribute to venom dispersion and prey subjugation by inducing vascular permeability and hypotension. This protein potently stimulates dermal human microvascular endothelial cell (dHMVEC) proliferation in a VEGFR-2 dependent manner. This stimulatory effect is correlated with activation of the MAPK Erk1/2 signaling pathway. It also appears to be a chemoattractant for migration of these cells and stimulates their radial migration in a collagen gel. In vivo, it induces angiogenesis in a Japanese quail assay. This pro-angiogenic effect may also be related to its interaction with VEGFR-2. In addition, it may induce an increase in capillary permeability after intradermal injection, as well as a drastic hypotensive effect after intravenous injection. The hypotension is mediated by nitric oxide (NO), which is produced by VEGF-activated endothelium NO synthase. The chain is Snake venom vascular endothelial growth factor toxin from Daboia palaestinae (Palestine viper).